The sequence spans 306 residues: Pantothenate kinase (306 aa).

91–98 (GSVAVGKS) lines the ATP pocket.

Belongs to the prokaryotic pantothenate kinase family.

The protein localises to the cytoplasm. The catalysed reaction is (R)-pantothenate + ATP = (R)-4'-phosphopantothenate + ADP + H(+). It functions in the pathway cofactor biosynthesis; coenzyme A biosynthesis; CoA from (R)-pantothenate: step 1/5. The chain is Pantothenate kinase from Streptococcus equi subsp. equi (strain 4047).